We begin with the raw amino-acid sequence, 453 residues long: Kynureninase (453 aa).

Residues Leu-111, Thr-112, 139–142 (FPSD), Ser-196, Asp-226, His-229, and Tyr-251 contribute to the pyridoxal 5'-phosphate site. Lys-252 is subject to N6-(pyridoxal phosphate)lysine. Trp-286 and Asn-314 together coordinate pyridoxal 5'-phosphate.

The protein belongs to the kynureninase family. As to quaternary structure, homodimer. It depends on pyridoxal 5'-phosphate as a cofactor.

Its subcellular location is the cytoplasm. The protein localises to the nucleus. It catalyses the reaction L-kynurenine + H2O = anthranilate + L-alanine + H(+). The enzyme catalyses 3-hydroxy-L-kynurenine + H2O = 3-hydroxyanthranilate + L-alanine + H(+). Its pathway is amino-acid degradation; L-kynurenine degradation; L-alanine and anthranilate from L-kynurenine: step 1/1. It participates in cofactor biosynthesis; NAD(+) biosynthesis; quinolinate from L-kynurenine: step 2/3. Catalyzes the cleavage of L-kynurenine (L-Kyn) and L-3-hydroxykynurenine (L-3OHKyn) into anthranilic acid (AA) and 3-hydroxyanthranilic acid (3-OHAA), respectively. This Saccharomyces cerevisiae (strain ATCC 204508 / S288c) (Baker's yeast) protein is Kynureninase.